Here is a 610-residue protein sequence, read N- to C-terminus: Dihydroxy-acid dehydratase (610 aa).

Asp81 provides a ligand contact to Mg(2+). Cys122 serves as a coordination point for [2Fe-2S] cluster. Mg(2+) is bound by residues Asp123 and Lys124. N6-carboxylysine is present on Lys124. Residue Cys193 coordinates [2Fe-2S] cluster. Position 489 (Glu489) interacts with Mg(2+). The active-site Proton acceptor is the Ser515.

Belongs to the IlvD/Edd family. As to quaternary structure, homodimer. Requires [2Fe-2S] cluster as cofactor. It depends on Mg(2+) as a cofactor.

The enzyme catalyses (2R)-2,3-dihydroxy-3-methylbutanoate = 3-methyl-2-oxobutanoate + H2O. It carries out the reaction (2R,3R)-2,3-dihydroxy-3-methylpentanoate = (S)-3-methyl-2-oxopentanoate + H2O. It functions in the pathway amino-acid biosynthesis; L-isoleucine biosynthesis; L-isoleucine from 2-oxobutanoate: step 3/4. It participates in amino-acid biosynthesis; L-valine biosynthesis; L-valine from pyruvate: step 3/4. Its function is as follows. Functions in the biosynthesis of branched-chain amino acids. Catalyzes the dehydration of (2R,3R)-2,3-dihydroxy-3-methylpentanoate (2,3-dihydroxy-3-methylvalerate) into 2-oxo-3-methylpentanoate (2-oxo-3-methylvalerate) and of (2R)-2,3-dihydroxy-3-methylbutanoate (2,3-dihydroxyisovalerate) into 2-oxo-3-methylbutanoate (2-oxoisovalerate), the penultimate precursor to L-isoleucine and L-valine, respectively. This is Dihydroxy-acid dehydratase from Xylella fastidiosa (strain M23).